The following is a 254-amino-acid chain: Probable protein ABIL5 (254 aa).

The interval 1-26 (MEVAEAGVDGVAGRRQQEEASGAAPF) is disordered.

Belongs to the ABI family. As to quaternary structure, binds SCAR.

Its subcellular location is the cytoplasm. The protein resides in the cytoskeleton. In terms of biological role, involved in regulation of actin and microtubule organization. Part of a WAVE complex that activates the Arp2/3 complex. This is Probable protein ABIL5 from Oryza sativa subsp. japonica (Rice).